The primary structure comprises 432 residues: Probable pectate lyase 22 (432 aa).

The first 45 residues, 1–45 (MFRPNSLLIPSNLSTTKSQRNTMLNSSYLSFALIFFCCILFSALA), serve as a signal peptide directing secretion. Asn-65 carries N-linked (GlcNAc...) asparagine glycosylation. Positions 228, 252, and 256 each coordinate Ca(2+). The active site involves Arg-308.

The protein belongs to the polysaccharide lyase 1 family. It depends on Ca(2+) as a cofactor.

It carries out the reaction Eliminative cleavage of (1-&gt;4)-alpha-D-galacturonan to give oligosaccharides with 4-deoxy-alpha-D-galact-4-enuronosyl groups at their non-reducing ends.. It functions in the pathway glycan metabolism; pectin degradation; 2-dehydro-3-deoxy-D-gluconate from pectin: step 2/5. In Arabidopsis thaliana (Mouse-ear cress), this protein is Probable pectate lyase 22.